Here is a 545-residue protein sequence, read N- to C-terminus: Probable protein kinase UbiB (545 aa).

The Protein kinase domain maps to aspartate 123–leucine 501. ATP-binding positions include leucine 129–valine 137 and lysine 152. Aspartate 287 serves as the catalytic Proton acceptor. The chain crosses the membrane as a helical span at residues leucine 508 to isoleucine 528.

The protein belongs to the ABC1 family. UbiB subfamily.

It is found in the cell inner membrane. It functions in the pathway cofactor biosynthesis; ubiquinone biosynthesis [regulation]. Functionally, is probably a protein kinase regulator of UbiI activity which is involved in aerobic coenzyme Q (ubiquinone) biosynthesis. This Photorhabdus laumondii subsp. laumondii (strain DSM 15139 / CIP 105565 / TT01) (Photorhabdus luminescens subsp. laumondii) protein is Probable protein kinase UbiB.